The chain runs to 191 residues: Small ribosomal subunit protein uS5 (191 aa).

Positions 1 to 20 are disordered; that stretch reads MAGERERGGRERSRDREERD. Residues 23–86 form the S5 DRBM domain; the sequence is FVDKLVHINR…ESAKRNLTRV (64 aa).

It belongs to the universal ribosomal protein uS5 family. Part of the 30S ribosomal subunit. Contacts proteins S4 and S8.

In terms of biological role, with S4 and S12 plays an important role in translational accuracy. Its function is as follows. Located at the back of the 30S subunit body where it stabilizes the conformation of the head with respect to the body. This Nitrobacter winogradskyi (strain ATCC 25391 / DSM 10237 / CIP 104748 / NCIMB 11846 / Nb-255) protein is Small ribosomal subunit protein uS5.